Consider the following 272-residue polypeptide: 27-O-demethylrifamycin SV methyltransferase (272 aa).

Residues Ser89, Gln94, 117–118 (DA), Leu134, and His139 each bind S-adenosyl-L-methionine.

Belongs to the class I-like SAM-binding methyltransferase superfamily. Exists probably as a trimer.

The enzyme catalyses 27-O-demethylrifamycin SV + S-adenosyl-L-methionine = rifamycin SV + S-adenosyl-L-homocysteine + H(+). The protein operates within antibiotic biosynthesis; rifamycin B biosynthesis. Its activity is regulated as follows. Slightly inhibited by Ca(2+) and Mg(2+). Strongly inhibited by Zn(2+), Ni(2+) and Co(2+). Its function is as follows. Catalyzes the methylation of 27-O-demethylrifamycin SV (DMRSV) to rifamycin SV. The sequence is that of 27-O-demethylrifamycin SV methyltransferase from Amycolatopsis mediterranei (strain S699) (Nocardia mediterranei).